A 126-amino-acid polypeptide reads, in one-letter code: Acidic phospholipase A2 3 (126 aa).

A propeptide spanning residues 1-7 (SNRPMPL) is cleaved from the precursor. Disulfide bonds link Cys18–Cys78, Cys33–Cys125, Cys35–Cys51, Cys50–Cys106, Cys57–Cys99, Cys67–Cys92, and Cys85–Cys97. Residues Tyr34, Gly36, and Gly38 each contribute to the Ca(2+) site. His54 is a catalytic residue. Ca(2+) is bound at residue Asp55. Asp100 is an active-site residue.

It belongs to the phospholipase A2 family. Group I subfamily. D49 sub-subfamily. Ca(2+) serves as cofactor. In terms of tissue distribution, expressed by the venom gland.

The protein resides in the secreted. The catalysed reaction is a 1,2-diacyl-sn-glycero-3-phosphocholine + H2O = a 1-acyl-sn-glycero-3-phosphocholine + a fatty acid + H(+). PLA2 catalyzes the calcium-dependent hydrolysis of the 2-acyl groups in 3-sn-phosphoglycerides. This Naja sagittifera (Andaman cobra) protein is Acidic phospholipase A2 3.